The sequence spans 255 residues: uncharacterized protein (255 aa).

A signal peptide spans 1–23 (MKRLNKLVLYISFLILVISFTAG). C24 carries N-palmitoyl cysteine lipidation. C24 carries the S-diacylglycerol cysteine lipid modification.

Belongs to the staphylococcal tandem lipoprotein family.

The protein localises to the cell membrane. This is an uncharacterized protein from Staphylococcus aureus (strain N315).